The following is a 270-amino-acid chain: Aliphatic sulfonates import ATP-binding protein SsuB (270 aa).

The ABC transporter domain maps to 17 to 238 (LAANDLRRTF…VRGSHRLAAL (222 aa)). 49–56 (GRSGCGKS) lines the ATP pocket. A disordered region spans residues 250–270 (PGTPPEPEPVAPLPTHLRWAH). Residues 251-261 (GTPPEPEPVAP) are compositionally biased toward pro residues.

Belongs to the ABC transporter superfamily. Aliphatic sulfonates importer (TC 3.A.1.17.2) family. The complex is composed of two ATP-binding proteins (SsuB), two transmembrane proteins (SsuC) and a solute-binding protein (SsuA).

It is found in the cell inner membrane. The enzyme catalyses ATP + H2O + aliphatic sulfonate-[sulfonate-binding protein]Side 1 = ADP + phosphate + aliphatic sulfonateSide 2 + [sulfonate-binding protein]Side 1.. Its function is as follows. Part of the ABC transporter complex SsuABC involved in aliphatic sulfonates import. Responsible for energy coupling to the transport system. The sequence is that of Aliphatic sulfonates import ATP-binding protein SsuB from Pseudomonas entomophila (strain L48).